Consider the following 95-residue polypeptide: Aspartyl/glutamyl-tRNA(Asn/Gln) amidotransferase subunit C (95 aa).

It belongs to the GatC family. In terms of assembly, heterotrimer of A, B and C subunits.

It catalyses the reaction L-glutamyl-tRNA(Gln) + L-glutamine + ATP + H2O = L-glutaminyl-tRNA(Gln) + L-glutamate + ADP + phosphate + H(+). The catalysed reaction is L-aspartyl-tRNA(Asn) + L-glutamine + ATP + H2O = L-asparaginyl-tRNA(Asn) + L-glutamate + ADP + phosphate + 2 H(+). Functionally, allows the formation of correctly charged Asn-tRNA(Asn) or Gln-tRNA(Gln) through the transamidation of misacylated Asp-tRNA(Asn) or Glu-tRNA(Gln) in organisms which lack either or both of asparaginyl-tRNA or glutaminyl-tRNA synthetases. The reaction takes place in the presence of glutamine and ATP through an activated phospho-Asp-tRNA(Asn) or phospho-Glu-tRNA(Gln). The protein is Aspartyl/glutamyl-tRNA(Asn/Gln) amidotransferase subunit C of Rhodopseudomonas palustris (strain TIE-1).